We begin with the raw amino-acid sequence, 123 residues long: Large ribosomal subunit protein uL14 (123 aa).

The protein belongs to the universal ribosomal protein uL14 family. As to quaternary structure, part of the 50S ribosomal subunit. Forms a cluster with proteins L3 and L19. In the 70S ribosome, L14 and L19 interact and together make contacts with the 16S rRNA in bridges B5 and B8.

Its function is as follows. Binds to 23S rRNA. Forms part of two intersubunit bridges in the 70S ribosome. The sequence is that of Large ribosomal subunit protein uL14 from Aliivibrio salmonicida (strain LFI1238) (Vibrio salmonicida (strain LFI1238)).